Reading from the N-terminus, the 761-residue chain is Zinc finger protein 287 (761 aa).

Positions 49–131 (RQNFRNFPYP…TLVEDLTQIL (83 aa)) constitute an SCAN box domain. The tract at residues 134–154 (EAPQNSTLSQDTPEEDPRGKH) is disordered. The region spanning 170–238 (MTFKDVAVDI…IKEILEGPSP (69 aa)) is the KRAB domain. 14 C2H2-type zinc fingers span residues 368–390 (YKCNVCGKKFRKYPSLLKHQSTH), 396–418 (YECEECGKEFRHISSLIAHQRMH), 424–446 (YECHQCGKAFSQRAHLTIHQRIH), 452–474 (YKCDDCGKDFSQRAHLTIHQRTH), 480–502 (YKCLECGKTFSHSSSLINHQRVH), 508–530 (YICNECGKTFSQSTHLLQHQKIH), 536–558 (YKCNECWKVFSQSTYLIRHQRIH), 564–586 (YKCNECGKAFAHSSTLIQHQTTH), 592–614 (YICNICGKAFSQSANLTQHHRTH), 620–642 (YKCSVCGKAFSQSVHLTQHQRIH), 648–670 (FKCNICGKAYRQGANLTQHQRIH), 676–698 (YKCNECGKAFIYSSSLNQHQRTH), 704–726 (YKCNECDKDFSQRTCLIQHQRIH), and 732–754 (YACRICGKTFTQSTNLIQHQRVH).

It belongs to the krueppel C2H2-type zinc-finger protein family.

It is found in the nucleus. Functionally, may be involved in transcriptional regulation. The chain is Zinc finger protein 287 from Homo sapiens (Human).